The sequence spans 282 residues: N-methyltransferase gliN (282 aa).

The protein belongs to the methyltransferase superfamily. LaeA methyltransferase family.

It functions in the pathway mycotoxin biosynthesis. In terms of biological role, N-methyltransferase; part of the gene cluster that mediates the biosynthesis of gliotoxin, a member of the epipolythiodioxopiperazine (ETP) class of toxins characterized by a disulfide bridged cyclic dipeptide. The first step in gliotoxin biosynthesis is the condensation of serine and phenylalanine to form the cyclo-L-phenylalanyl-L-serine diketopiperazine (DKP) by the NRPS gliP. GliP is also able to produce the DKP cyclo-L-tryptophanyl-L-serine, suggesting that the substrate specificity of the first adenylation (A) domain in gliP is sufficiently relaxed to accommodate both L-Phe and L-Trp. The cytochrome P450 monooxygenase gliC has been shown to catalyze the subsequent hydroxylation of the alpha-carbon of L-Phe in cyclo-L-phenylalanyl-L-serine whereas the second cytochrome P450 enzyme, gliF, is presumably involved in the modification of the DKP side chain. The glutathione S-transferase (GST) gliG then forms a bis-glutathionylated biosynthetic intermediate which is responsible for the sulfurization of gliotoxin. This bis-glutathionylated intermediate is subsequently processed by the gamma-glutamyl cyclotransferase gliK to remove both gamma-glutamyl moieties. Subsequent processing via gliI yields a biosynthetic intermediate, which is N-methylated via the N-methyltransferase gliN, before the gliotoxin oxidoreductase gliT-mediated disulfide bridge closure. GliN-mediated amide methylation confers stability to ETP, damping the spontaneous formation of tri- and tetrasulfides. Intracellular dithiol gliotoxin oxidized by gliT is subsequently effluxed by gliA. Gliotoxin contributes to pathogenesis during invasive aspergillosis. In macrophages and neutrophils, gliotoxin showed inhibition of various different cell functions including cytokine production, antigen presentation, phagocytosis, and production of reactive oxygen species. The polypeptide is N-methyltransferase gliN (Aspergillus fumigatus (strain ATCC MYA-4609 / CBS 101355 / FGSC A1100 / Af293) (Neosartorya fumigata)).